A 37-amino-acid polypeptide reads, in one-letter code: Potassium channel toxin alpha-KTx 11.2 (37 aa).

Cystine bridges form between Cys8–Cys27, Cys13–Cys33, and Cys17–Cys35.

Belongs to the short scorpion toxin superfamily. Potassium channel inhibitor family. Alpha-KTx 11 subfamily. As to expression, expressed by the venom gland.

It localises to the secreted. Binds and inhibits voltage-sensitive potassium channels. Inhibits the vertebrate potassium channel Kv1.1/KCNA1 with low affinity. The polypeptide is Potassium channel toxin alpha-KTx 11.2 (Parabuthus villosus (Black hairy thick-tailed scorpion)).